The following is a 214-amino-acid chain: Pyridoxine/pyridoxamine 5'-phosphate oxidase (214 aa).

Residues 8–11 and Lys66 each bind substrate; that span reads RINY. FMN is bound by residues 61-66, 76-77, Arg82, Lys83, and Gln105; these read RIVLIK and FT. Substrate contacts are provided by Tyr123, Arg127, and Ser131. Residues 140–141 and Trp184 each bind FMN; that span reads QS. Position 190–192 (190–192) interacts with substrate; sequence RLH. Arg194 is an FMN binding site.

This sequence belongs to the pyridoxamine 5'-phosphate oxidase family. In terms of assembly, homodimer. Requires FMN as cofactor.

It carries out the reaction pyridoxamine 5'-phosphate + O2 + H2O = pyridoxal 5'-phosphate + H2O2 + NH4(+). It catalyses the reaction pyridoxine 5'-phosphate + O2 = pyridoxal 5'-phosphate + H2O2. Its pathway is cofactor metabolism; pyridoxal 5'-phosphate salvage; pyridoxal 5'-phosphate from pyridoxamine 5'-phosphate: step 1/1. The protein operates within cofactor metabolism; pyridoxal 5'-phosphate salvage; pyridoxal 5'-phosphate from pyridoxine 5'-phosphate: step 1/1. Functionally, catalyzes the oxidation of either pyridoxine 5'-phosphate (PNP) or pyridoxamine 5'-phosphate (PMP) into pyridoxal 5'-phosphate (PLP). The chain is Pyridoxine/pyridoxamine 5'-phosphate oxidase from Burkholderia lata (strain ATCC 17760 / DSM 23089 / LMG 22485 / NCIMB 9086 / R18194 / 383).